A 135-amino-acid polypeptide reads, in one-letter code: NADPH-dependent 7-cyano-7-deazaguanine reductase (135 aa).

Cys-48 serves as the catalytic Thioimide intermediate. The active-site Proton donor is the Asp-55. Residues 70–72 and 89–90 each bind substrate; these read IEL and HE.

It belongs to the GTP cyclohydrolase I family. QueF type 1 subfamily.

Its subcellular location is the cytoplasm. It catalyses the reaction 7-aminomethyl-7-carbaguanine + 2 NADP(+) = 7-cyano-7-deazaguanine + 2 NADPH + 3 H(+). It functions in the pathway tRNA modification; tRNA-queuosine biosynthesis. Its function is as follows. Catalyzes the NADPH-dependent reduction of 7-cyano-7-deazaguanine (preQ0) to 7-aminomethyl-7-deazaguanine (preQ1). In Prochlorococcus marinus (strain MIT 9313), this protein is NADPH-dependent 7-cyano-7-deazaguanine reductase.